Reading from the N-terminus, the 735-residue chain is 1,4-alpha-glucan branching enzyme GlgB (735 aa).

The active-site Nucleophile is the Asp414. Glu469 functions as the Proton donor in the catalytic mechanism.

Belongs to the glycosyl hydrolase 13 family. GlgB subfamily. Monomer.

It catalyses the reaction Transfers a segment of a (1-&gt;4)-alpha-D-glucan chain to a primary hydroxy group in a similar glucan chain.. Its pathway is glycan biosynthesis; glycogen biosynthesis. Catalyzes the formation of the alpha-1,6-glucosidic linkages in glycogen by scission of a 1,4-alpha-linked oligosaccharide from growing alpha-1,4-glucan chains and the subsequent attachment of the oligosaccharide to the alpha-1,6 position. This is 1,4-alpha-glucan branching enzyme GlgB from Burkholderia lata (strain ATCC 17760 / DSM 23089 / LMG 22485 / NCIMB 9086 / R18194 / 383).